A 465-amino-acid chain; its full sequence is Deoxyguanosinetriphosphate triphosphohydrolase-like protein (465 aa).

The disordered stretch occupies residues 1–22 (MKWDKLLNDKRRRESGVTRSKN). The HD domain occupies 63 to 252 (RLTHSMEVST…LEVADDIAYL (190 aa)).

It belongs to the dGTPase family. Type 3 subfamily.

The sequence is that of Deoxyguanosinetriphosphate triphosphohydrolase-like protein from Listeria monocytogenes serovar 1/2a (strain ATCC BAA-679 / EGD-e).